Reading from the N-terminus, the 157-residue chain is Small ribosomal subunit protein uS7 (157 aa).

The protein belongs to the universal ribosomal protein uS7 family. In terms of assembly, part of the 30S ribosomal subunit. Contacts proteins S9 and S11.

In terms of biological role, one of the primary rRNA binding proteins, it binds directly to 16S rRNA where it nucleates assembly of the head domain of the 30S subunit. Is located at the subunit interface close to the decoding center, probably blocks exit of the E-site tRNA. This chain is Small ribosomal subunit protein uS7, found in Desulfotalea psychrophila (strain LSv54 / DSM 12343).